The chain runs to 111 residues: Nucleoid-associated protein Cag_1190 (111 aa).

The protein belongs to the YbaB/EbfC family. Homodimer.

The protein resides in the cytoplasm. It localises to the nucleoid. Functionally, binds to DNA and alters its conformation. May be involved in regulation of gene expression, nucleoid organization and DNA protection. This is Nucleoid-associated protein Cag_1190 from Chlorobium chlorochromatii (strain CaD3).